Consider the following 789-residue polypeptide: Zinc finger protein GLIS1 (789 aa).

2 stretches are compositionally biased toward basic and acidic residues: residues 1–16 and 63–74; these read MHCE…RPKE and RAHDLLRPRSPR. Disordered stretches follow at residues 1–29, 53–93, and 278–304; these read MHCE…GPVS, LLPR…YGHS, and PPLP…QEGS. Polar residues predominate over residues 80–92; it reads KTGSGKVNGSYGH. A C2H2-type 1 zinc finger spans residues 366–391; the sequence is QACRWVDCCAAYEQQEELVRHIEKSH. Residues 400 to 427 form a C2H2-type 2; atypical zinc finger; that stretch reads FTCFWAGCVRRYKPFNARYKLLIHMRVH. 3 C2H2-type zinc fingers span residues 433–457, 463–487, and 493–517; these read NKCM…LRSH, YLCQ…QRTH, and YACQ…VKAH. Disordered regions lie at residues 506–529 and 573–684; these read DPSS…KKLH and VYPG…QGYQ. Positions 511-527 match the Bipartite nuclear localization signal motif; that stretch reads RKHVKAHSAKEQQVRKK. The span at 648-658 shows a compositional bias: low complexity; the sequence is ASQSQSPGGQS.

Belongs to the GLI C2H2-type zinc-finger protein family. In terms of assembly, interacts with KLF4. Interacts with POU5F1 and/or POU5F1B. Interacts with SOX2. In the adult, expressed highly in placenta and kidney and at lower levels in the testis, brain, colon, brown fat tissue and thymus. During embryo development, expressed in the frontal nasal region, branchial arches, somites, vibrissal and hair follicles, limb buds, craniofacial regions, ventral part of the tail, intervertebral disks, teeth, eyes and kidney.

The protein localises to the nucleus. Its function is as follows. Acts both as a repressor and an ctivator of transcription. Binds to the consensus sequence 5'-GACCACCCAC-3'. By controlling the expression of genes involved in cell differentiation inhibits the lineage commitment of multipotent cells. Prevents, for instance, the differentiation of multipotent mesenchymal cells into adipocyte and osteoblast. This is Zinc finger protein GLIS1 from Mus musculus (Mouse).